The primary structure comprises 85 residues: ATP synthase subunit c (85 aa).

The next 2 helical transmembrane spans lie at 10–30 (IAVA…FGLL) and 53–73 (FIVA…ALFF).

Belongs to the ATPase C chain family. F-type ATPases have 2 components, F(1) - the catalytic core - and F(0) - the membrane proton channel. F(1) has five subunits: alpha(3), beta(3), gamma(1), delta(1), epsilon(1). F(0) has three main subunits: a(1), b(2) and c(10-14). The alpha and beta chains form an alternating ring which encloses part of the gamma chain. F(1) is attached to F(0) by a central stalk formed by the gamma and epsilon chains, while a peripheral stalk is formed by the delta and b chains.

The protein localises to the cell inner membrane. In terms of biological role, f(1)F(0) ATP synthase produces ATP from ADP in the presence of a proton or sodium gradient. F-type ATPases consist of two structural domains, F(1) containing the extramembraneous catalytic core and F(0) containing the membrane proton channel, linked together by a central stalk and a peripheral stalk. During catalysis, ATP synthesis in the catalytic domain of F(1) is coupled via a rotary mechanism of the central stalk subunits to proton translocation. Functionally, key component of the F(0) channel; it plays a direct role in translocation across the membrane. A homomeric c-ring of between 10-14 subunits forms the central stalk rotor element with the F(1) delta and epsilon subunits. In Pseudomonas syringae pv. syringae (strain B728a), this protein is ATP synthase subunit c.